A 2494-amino-acid chain; its full sequence is Nuclear receptor corepressor 1 (2494 aa).

A compositionally biased stretch (polar residues) spans 1 to 33 (MSSSGYPPNQGAFSTEQGRYSSHPVQYTFPSSR). Disordered regions lie at residues 1–38 (MSSS…QQEF), 53–106 (LLQQ…PRLD), 134–170 (SEVK…KLSK), and 198–222 (QQQL…PVEQ). Residues 71–82 (PVSDRPQDRRQG) are compositionally biased toward basic and acidic residues. Polar residues predominate over residues 83–92 (YEQQYHSVTQ). 3 stretches are compositionally biased toward basic and acidic residues: residues 93–106 (NEHE…PRLD), 134–148 (SEVK…KHET), and 204–213 (EAAKPPEPEK). The segment at 154 to 304 (SGQPGEEQEA…REQNICQRYD (151 aa)) is interaction with tbl1xr1. Positions 168–208 (LSKEELIQSMDRVDREIAKVEQQILKLKKKQQQLEEEAAKP) form a coiled coil. Residues 427-478 (QFMNVWTDHEKEIFKEKFVQHPKNFGLIASYLERKTVSDCVLYYYLTKKNEN) form the SANT 1 domain. Disordered regions lie at residues 488–638 (PKRR…VEHG), 671–913 (NLLQ…LDSK), 981–1007 (RQRQ…PNMD), 1081–1124 (GARL…GTPG), 1413–1434 (IHEI…ESSR), 1488–1585 (MGER…TQRE), 1745–1845 (LAFP…QESI), and 1912–1987 (EVVK…AHTK). 2 stretches are compositionally biased toward basic and acidic residues: residues 502–525 (AQEE…KEEE) and 535–548 (KEEL…RTDA). Residues 502 to 549 (AQEEKEIEKVEEEKAERNDKKEEERREEEEKEEKEELRDGTKDRTDAI) adopt a coiled-coil conformation. The span at 582-616 (ASEAAAAANAASTATTAPATTTSTTATTTTAALVP) shows a compositional bias: low complexity. A compositionally biased stretch (pro residues) spans 617–629 (VAPPPEEPTPPPT). Positions 622 to 668 (EEPTPPPTQEQSLVEHGRNWGAIAKMVGSKSESQCKNFYFNYKRRHN) constitute an SANT 2 domain. The span at 692 to 702 (QCESVASTVSA) shows a compositional bias: polar residues. A coiled-coil region spans residues 698 to 726 (STVSAQEDEENEASNEEENAEDSEGAENS). Over residues 703–722 (QEDEENEASNEEENAEDSEG) the composition is skewed to acidic residues. The span at 723 to 741 (AENSSDTESAPSPSPAEAA) shows a compositional bias: low complexity. Residues 766–779 (ASKSVSDSSPTPTV) are compositionally biased toward polar residues. The span at 829–864 (AEPDEVESKPSESAEVKIEEDTKDQDMERLMDRAEA) shows a compositional bias: basic and acidic residues. Composition is skewed to polar residues over residues 881 to 892 (ESQSDNDSSATC), 993 to 1004 (MSASPGNMSKSP), and 1104 to 1124 (ATSS…GTPG). Residues 1488-1504 (MGERSKYEDTKSSEAIR) are compositionally biased toward basic and acidic residues. Residues 1508–1519 (TSVVSSGPSVLR) are compositionally biased toward polar residues. The segment covering 1548 to 1561 (PSPMSRSSPMARSA) has biased composition (low complexity). The stretch at 1771-1810 (VSAERERERERDRERDREREKEQRERERDRERERERLAAA) forms a coiled coil. Residues 1773–1807 (AERERERERDRERDREREKEQRERERDRERERERL) show a composition bias toward basic and acidic residues. Residues 1835–1845 (PSPSVRAQESI) show a composition bias toward polar residues. A compositionally biased stretch (basic and acidic residues) spans 1914–1935 (VKPKEMKHDPARSEESLSRRNV). The span at 1953-1972 (QSPYTSSSFSGSKSQGQPSP) shows a compositional bias: low complexity. The segment covering 1978–1987 (AGKEKTAHTK) has biased composition (basic and acidic residues). Residues 2008–2012 (IDVII) carry the CORNR box 1 motif. Residues 2018–2105 (SDKDGRDRNS…PSPQQTIPGH (88 aa)) are disordered. Low complexity predominate over residues 2027–2036 (SQSSDSSSSH). Basic and acidic residues predominate over residues 2039–2048 (HRYDAPRDTI). Residues 2088 to 2102 (RYRQQQESPSPQQTI) show a composition bias toward polar residues. The short motif at 2119–2123 (ICQII) is the CORNR box 2 element. The segment covering 2135–2177 (QALQQPPASTFQSTNPSSTPVRTKASSRFSPESQVQPVHNQRP) has biased composition (polar residues). The interval 2135–2216 (QALQQPPAST…YEPISPPQAP (82 aa)) is disordered. Residues 2186–2205 (VLDRPRGRPGKSPDRGHISE) show a composition bias toward basic and acidic residues. The short motif at 2322–2326 (LEDII) is the CORNR box 3 element. Disordered stretches follow at residues 2346–2413 (GVAQ…SVHS) and 2446–2494 (MLNS…DSDE). Positions 2376 to 2390 (HKQKLISKYGSRKTK) are enriched in basic residues. 2 stretches are compositionally biased toward polar residues: residues 2446-2472 (MLNS…QQSR) and 2485-2494 (QYETLSDSDE).

The protein belongs to the N-CoR nuclear receptor corepressors family. Forms a large corepressor complex that contains sin3a/b, histone deacetylases hdac1 and hdac2, rbbp4 and possibly rbbp7. Interacts with the thyroid receptor (TR, composed of rxra and thrb) and the retinoid acid receptor (RAR, composed of rxra and rara) in the absence of ligand. Interacts with tbl1xr1. Interacts with zbtb33/kaiso.

The protein resides in the nucleus. Mediates transcriptional repression by certain nuclear receptors. Participates in complexes which promote histone deacetylation and the formation of repressive chromatin structures which may impede access by the basal transcription machinery. In association with hdac3, may play a role in the regulation of the circadian clock. The polypeptide is Nuclear receptor corepressor 1 (ncor1) (Xenopus tropicalis (Western clawed frog)).